Reading from the N-terminus, the 179-residue chain is Large ribosomal subunit protein uL5 (179 aa).

This sequence belongs to the universal ribosomal protein uL5 family. Part of the 50S ribosomal subunit; part of the 5S rRNA/L5/L18/L25 subcomplex. Contacts the 5S rRNA and the P site tRNA. Forms a bridge to the 30S subunit in the 70S ribosome.

Its function is as follows. This is one of the proteins that bind and probably mediate the attachment of the 5S RNA into the large ribosomal subunit, where it forms part of the central protuberance. In the 70S ribosome it contacts protein S13 of the 30S subunit (bridge B1b), connecting the 2 subunits; this bridge is implicated in subunit movement. Contacts the P site tRNA; the 5S rRNA and some of its associated proteins might help stabilize positioning of ribosome-bound tRNAs. This is Large ribosomal subunit protein uL5 from Geobacter sp. (strain M21).